Reading from the N-terminus, the 220-residue chain is UPF0502 protein PSPPH_2577 (220 aa).

The protein belongs to the UPF0502 family.

The protein is UPF0502 protein PSPPH_2577 of Pseudomonas savastanoi pv. phaseolicola (strain 1448A / Race 6) (Pseudomonas syringae pv. phaseolicola (strain 1448A / Race 6)).